The following is a 162-amino-acid chain: CASP-like protein BLE3 (162 aa).

The Cytoplasmic segment spans residues Met-1 to Leu-7. Residues Met-8–Val-28 form a helical membrane-spanning segment. Residues Thr-29 to Ser-50 lie on the Extracellular side of the membrane. A helical membrane pass occupies residues Phe-51–Val-71. Over Pro-72–Asp-85 the chain is Cytoplasmic. The chain crosses the membrane as a helical span at residues Val-86 to Ala-106. Over Lys-107–His-128 the chain is Extracellular. Residues Val-129 to Tyr-149 form a helical membrane-spanning segment. Residues Ser-150–His-162 lie on the Cytoplasmic side of the membrane.

Belongs to the Casparian strip membrane proteins (CASP) family. As to quaternary structure, homodimer and heterodimers.

It localises to the cell membrane. Its function is as follows. Involved in cell elongation in rice through dual regulation by brassinolide and auxin. The sequence is that of CASP-like protein BLE3 (BLE3) from Oryza sativa subsp. indica (Rice).